The chain runs to 444 residues: UPF0053 protein YhdP (444 aa).

The region spanning 1–201 is the CNNM transmembrane domain; the sequence is MDIVNLILVA…YKSGEINQSE (201 aa). 3 helical membrane-spanning segments follow: residues 7–27, 61–81, and 101–121; these read ILVA…FAII, ACQL…ESTI, and VISF…VGEL. 2 consecutive CBS domains span residues 220–282 and 284–344; these read MIPR…SVDS and ISQF…IRDE.

This sequence belongs to the UPF0053 family.

It localises to the cell membrane. This Bacillus subtilis (strain 168) protein is UPF0053 protein YhdP (yhdP).